The primary structure comprises 343 residues: Thromboxane A2 receptor (343 aa).

Topologically, residues 1–29 are extracellular; that stretch reads MWPNASSLGPCFRPMNITLEERRLIASPW. Asparagine 4 and asparagine 16 each carry an N-linked (GlcNAc...) asparagine glycan. A helical membrane pass occupies residues 30 to 52; that stretch reads FAASFCLVGLASNLLALSVLMGA. The Cytoplasmic segment spans residues 53 to 66; the sequence is RQGSSQSRSSFLTF. The chain crosses the membrane as a helical span at residues 67–87; it reads LCGLVLTDFMGLLVTGAIVVT. At 88–106 the chain is on the extracellular side; that stretch reads QHFVLFEWQAVDPGCSLCH. Cysteine 105 and cysteine 183 are disulfide-bonded. The helical transmembrane segment at 107–128 threads the bilayer; sequence FMGVIMVFFGLCPLLLGAAMAS. At 129-149 the chain is on the cytoplasmic side; sequence ERFLGITRPFSRPATASQRRA. A helical transmembrane segment spans residues 150–172; it reads WTTVGLVWASALALGLLPLLGVG. Residues 173 to 193 are Extracellular-facing; it reads HYTVQYPGSWCFLTLGTDPGD. Residues 194–219 form a helical membrane-spanning segment; sequence VAFGLLFALLGSISVGMSFLLNTISV. The Cytoplasmic portion of the chain corresponds to 220–246; the sequence is ATLCHVYHGQATAQQRPRDCEVEMMVQ. Residues 247–270 form a helical membrane-spanning segment; that stretch reads LMGIMVVASICWMPLLVFIAQTVL. At 271-289 the chain is on the extracellular side; that stretch reads QSPPAMSPTGQLSRLTERQ. Residues 290–311 form a helical membrane-spanning segment; that stretch reads LLIYLRVATWNQILDPWVYILF. Residues 312–343 are Cytoplasmic-facing; it reads RRAVIQRFYPRLSTRSRSLSLQPQLTRRSTIH. Phosphoserine is present on residues serine 329 and serine 331.

Belongs to the G-protein coupled receptor 1 family. As to quaternary structure, interacts with RPGRIP1L. Interacts with RACK1; the interaction regulates TBXA2R cell surface expression.

The protein resides in the cell membrane. Receptor for thromboxane A2 (TXA2), a potent stimulator of platelet aggregation. The activity of this receptor is mediated by a G-protein that activates a phosphatidylinositol-calcium second messenger system. In the kidney, the binding of TXA2 to glomerular TP receptors causes intense vasoconstriction. Activates phospholipase C and adenylyl cyclase. The sequence is that of Thromboxane A2 receptor (TBXA2R) from Bos taurus (Bovine).